A 199-amino-acid chain; its full sequence is V-type ATP synthase subunit E (199 aa).

It belongs to the V-ATPase E subunit family.

Produces ATP from ADP in the presence of a proton gradient across the membrane. The sequence is that of V-type ATP synthase subunit E from Clostridium botulinum (strain Hall / ATCC 3502 / NCTC 13319 / Type A).